We begin with the raw amino-acid sequence, 101 residues long: Parathymosin (101 aa).

Residues 1–101 form a disordered region; that stretch reads MSEKSVEAAA…RQKTENGASA (101 aa). An N-acetylserine modification is found at Ser2. Position 2 is a phosphoserine (Ser2). Lys4 is subject to N6-acetyllysine. Ser5 and Ser13 each carry phosphoserine. The segment covering 13–37 has biased composition (basic and acidic residues); that stretch reads SAKDLKEKKDKVEEKAGRKERKKEV. Lys15 carries the post-translational modification N6-acetyllysine. A compositionally biased stretch (acidic residues) spans 38 to 74; it reads VEEEENGAEEEEEETAEDGEDDDEGDEEDEEEEEEDE. Thr52 bears the Phosphothreonine mark. At Lys91 the chain carries N6-acetyllysine.

It belongs to the pro/parathymosin family.

Its function is as follows. Parathymosin may mediate immune function by blocking the effect of prothymosin alpha which confers resistance to certain opportunistic infections. The protein is Parathymosin (Ptms) of Mus musculus (Mouse).